Reading from the N-terminus, the 368-residue chain is Transcription factor bHLH30 (368 aa).

Positions A3–F30 form a coiled coil. A bHLH domain is found at A173–L222. A disordered region spans residues K333–R368. The span at E337–R368 shows a compositional bias: polar residues.

Homodimer. Interacts with LHW.

The protein localises to the nucleus. The sequence is that of Transcription factor bHLH30 (BHLH30) from Arabidopsis thaliana (Mouse-ear cress).